A 470-amino-acid polypeptide reads, in one-letter code: Probable citrate synthase, mitochondrial (470 aa).

Residues histidine 297, histidine 351, and aspartate 406 contribute to the active site.

It belongs to the citrate synthase family. In terms of assembly, homodimer.

It localises to the mitochondrion matrix. The enzyme catalyses oxaloacetate + acetyl-CoA + H2O = citrate + CoA + H(+). It functions in the pathway carbohydrate metabolism; tricarboxylic acid cycle; isocitrate from oxaloacetate: step 1/2. The sequence is that of Probable citrate synthase, mitochondrial from Leishmania major.